A 185-amino-acid polypeptide reads, in one-letter code: Ribosome-recycling factor (185 aa).

This sequence belongs to the RRF family.

Its subcellular location is the cytoplasm. Responsible for the release of ribosomes from messenger RNA at the termination of protein biosynthesis. May increase the efficiency of translation by recycling ribosomes from one round of translation to another. The protein is Ribosome-recycling factor of Salinispora tropica (strain ATCC BAA-916 / DSM 44818 / JCM 13857 / NBRC 105044 / CNB-440).